Here is a 617-residue protein sequence, read N- to C-terminus: tRNA uridine 5-carboxymethylaminomethyl modification enzyme MnmG (617 aa).

Residues 9 to 14 (GAGHAG), Val-120, and Thr-175 each bind FAD. 267–281 (GPRYCPSIEDKVVRF) lines the NAD(+) pocket. Gln-364 provides a ligand contact to FAD.

Belongs to the MnmG family. Homodimer. Heterotetramer of two MnmE and two MnmG subunits. The cofactor is FAD.

Its subcellular location is the cytoplasm. Functionally, NAD-binding protein involved in the addition of a carboxymethylaminomethyl (cmnm) group at the wobble position (U34) of certain tRNAs, forming tRNA-cmnm(5)s(2)U34. The protein is tRNA uridine 5-carboxymethylaminomethyl modification enzyme MnmG of Onion yellows phytoplasma (strain OY-M).